The chain runs to 482 residues: Peptide chain release factor PrfB2, chloroplastic (482 aa).

A chloroplast-targeting transit peptide spans M1 to S21.

Belongs to the prokaryotic/mitochondrial release factor family.

It is found in the plastid. Its subcellular location is the chloroplast stroma. In terms of biological role, directs the termination of translation in response to the peptide chain termination codon UGA. Required for the proper translation, stability and normal processing of UGA-containing polycistronic transcripts in chloroplasts. This is Peptide chain release factor PrfB2, chloroplastic from Arabidopsis thaliana (Mouse-ear cress).